Reading from the N-terminus, the 422-residue chain is Glycine amidinotransferase, mitochondrial (422 aa).

The N-terminal 37 residues, 1 to 37, are a transit peptide targeting the mitochondrion; sequence MLRVRCVRGGSRGAEAVHYIGSMLRKGFVGWVQRSFQ. Residues Asp-253 and His-302 contribute to the active site. Cys-406 acts as the Amidino-cysteine intermediate in catalysis.

This sequence belongs to the amidinotransferase family. Homodimer.

The protein localises to the mitochondrion inner membrane. It carries out the reaction L-arginine + glycine = guanidinoacetate + L-ornithine. Its pathway is amine and polyamine biosynthesis; creatine biosynthesis; creatine from L-arginine and glycine: step 1/2. Its function is as follows. Catalyzes the biosynthesis of guanidinoacetate, the immediate precursor of creatine. Creatine plays a vital role in energy metabolism in muscle tissues. May play a role in embryonic and central nervous system development. This chain is Glycine amidinotransferase, mitochondrial, found in Xenopus tropicalis (Western clawed frog).